Consider the following 426-residue polypeptide: MAKQIQAIRGMNDILPTQSPLWQKMEAVLRSSVSAYGYSEIRTPIVENTDLFKRSIGEVTDIVEKEMYTFADNNGDSLTLRPEGTASTVRAGNENGLLYNQEQRLWYMGPMFRHERPQKGRYRQFNQFGVEVYGIGTADIDAEVLMLSARLWEKLGISDHVSLELNTLGDPAERAVYRDALIAFLEQHKDALDEDSKRRMYSNPLRVLDSKDQNVQAILAGAPELMDFLGEESKTHFSQLRELLDAVGIKYTINPRLVRGLDYYNRTVFEWVTSSLGSQGTVLAGGRYDGLVAQLGGKDTPAVGFAMGLERIVLLLETLELNKDIPSEVDVYVTAMGDSCLVEAIKIAQELRSALPNLKVMSHCGGGNVKKQMKRADKSGASVALLIGEDELAEGMVTVKHLRNDIEQQRVARSALGAFLAELAIK.

It belongs to the class-II aminoacyl-tRNA synthetase family. In terms of assembly, homodimer.

The protein resides in the cytoplasm. It catalyses the reaction tRNA(His) + L-histidine + ATP = L-histidyl-tRNA(His) + AMP + diphosphate + H(+). This Shewanella baltica (strain OS195) protein is Histidine--tRNA ligase.